A 368-amino-acid chain; its full sequence is MTPTTLPTSQRAVQQDGNGKLHVANNAAIPSLLPGHVLVKTYAVALNPSDYKIQKNFPIPGAYVGIDFSGTVVQVANDVDSINPGTEVFGAAFTFSSAHRLANGAFAEYVRVRADLLFRIPSEQQCQNDGDLTLFKAATLGTAMSTCLLSLWSPDALGLVGKPEEPVLSEKPIPVLVYGGSTSVGTIAIQLLKLSGYDPIATCSPRSFDLVRSRGASNVFDYSSADVALKIKTHTGGRLKYALDCISDVASVATCYAAIQRPGGRYVSLEYIPDELLAQRRAVRPNFVLSAELYGEEIVLGEEAYDRPANREKHQLAVQNVGMLQRLIDSGGLKTHPTEEIEGGLEGVVKGLVALAGGGHPRKLVAVV.

49–52 serves as a coordination point for NADP(+); the sequence is SDYK. Residue 135-142 participates in substrate binding; it reads FKAATLGT. NADP(+) is bound by residues 204-207, Y222, and 269-270; these read SPRS and LE. A substrate-binding site is contributed by 290–294; the sequence is SAELY. Position 360 to 361 (360 to 361) interacts with NADP(+); sequence HP.

It belongs to the zinc-containing alcohol dehydrogenase family. Monomer.

It functions in the pathway secondary metabolite biosynthesis. In terms of biological role, trans-enoyl reductase; part of the gene cluster that mediates the biosynthesis of wortmanamides A and B, reduced long-chain polyketides amidated with a specific omega-amino acid, 5-aminopentanoic acid (5PA). The PKS modules of TwmB are involved in the synthesis of the polyketide backbone, whereas the non-canonical C domain of TwmB is a bonafide condensation domain that specifically selects 5PA and catalyzes amidation to release polyketide chain. The C domain clearly prefers C16 and C18 fatty acyl substrates, which is consistent with simultaneous formation of both octaketide and nonaketide acyl amides wortmanamides A and B. Because TwmB lacks a designated enoylreductase (ER) domain, the required activity is provided the enoyl reductase TwmE. The roles of the remaining enzymes have still to be clarified. In Talaromyces wortmannii (Penicillium wortmannii), this protein is Trans-enoyl reductase TwmE.